Consider the following 481-residue polypeptide: Phosphoglycerate kinase, chloroplastic (481 aa).

A chloroplast-targeting transit peptide spans 1–75 (MASATASHTL…SSKPIRGVAS (75 aa)). A98, D99, N101, R115, S137, H138, G140, R141, R196, H228, and R229 together coordinate (2R)-3-phosphoglycerate. G274 contributes to the ADP binding site. A CDP-binding site is contributed by G274. Residues K276 and K280 each coordinate AMP. K280 is a binding site for ATP. G298 contacts ADP. A CDP-binding site is contributed by G298. 2 residues coordinate AMP: G299 and G371. ATP-binding residues include G299 and G371. CDP-binding residues include G396 and F401. F401 contributes to the ADP binding site. E402 contacts AMP. ATP contacts are provided by E402, D433, and S434. Position 433 (D433) interacts with Mg(2+).

The protein belongs to the phosphoglycerate kinase family. As to quaternary structure, monomer. Requires Mg(2+) as cofactor.

It is found in the plastid. The protein resides in the chloroplast. The enzyme catalyses (2R)-3-phosphoglycerate + ATP = (2R)-3-phospho-glyceroyl phosphate + ADP. It functions in the pathway carbohydrate biosynthesis; Calvin cycle. This chain is Phosphoglycerate kinase, chloroplastic, found in Nicotiana tabacum (Common tobacco).